The chain runs to 550 residues: Dihydroxy-acid dehydratase (550 aa).

Aspartate 78 serves as a coordination point for Mg(2+). Cysteine 119 is a binding site for [2Fe-2S] cluster. Residues aspartate 120 and lysine 121 each coordinate Mg(2+). Lysine 121 carries the post-translational modification N6-carboxylysine. Position 191 (cysteine 191) interacts with [2Fe-2S] cluster. A Mg(2+)-binding site is contributed by glutamate 440. The Proton acceptor role is filled by serine 466.

It belongs to the IlvD/Edd family. As to quaternary structure, homodimer. It depends on [2Fe-2S] cluster as a cofactor. Requires Mg(2+) as cofactor.

The catalysed reaction is (2R)-2,3-dihydroxy-3-methylbutanoate = 3-methyl-2-oxobutanoate + H2O. It catalyses the reaction (2R,3R)-2,3-dihydroxy-3-methylpentanoate = (S)-3-methyl-2-oxopentanoate + H2O. The protein operates within amino-acid biosynthesis; L-isoleucine biosynthesis; L-isoleucine from 2-oxobutanoate: step 3/4. It functions in the pathway amino-acid biosynthesis; L-valine biosynthesis; L-valine from pyruvate: step 3/4. Functionally, functions in the biosynthesis of branched-chain amino acids. Catalyzes the dehydration of (2R,3R)-2,3-dihydroxy-3-methylpentanoate (2,3-dihydroxy-3-methylvalerate) into 2-oxo-3-methylpentanoate (2-oxo-3-methylvalerate) and of (2R)-2,3-dihydroxy-3-methylbutanoate (2,3-dihydroxyisovalerate) into 2-oxo-3-methylbutanoate (2-oxoisovalerate), the penultimate precursor to L-isoleucine and L-valine, respectively. The polypeptide is Dihydroxy-acid dehydratase (Methanococcus vannielii (strain ATCC 35089 / DSM 1224 / JCM 13029 / OCM 148 / SB)).